Consider the following 860-residue polypeptide: Leucine--tRNA ligase (860 aa).

The 'HIGH' region signature appears at 42–52 (PYPSGRLHMGH). Positions 619-623 (KMSKS) match the 'KMSKS' region motif. Residue lysine 622 coordinates ATP.

It belongs to the class-I aminoacyl-tRNA synthetase family.

The protein resides in the cytoplasm. The catalysed reaction is tRNA(Leu) + L-leucine + ATP = L-leucyl-tRNA(Leu) + AMP + diphosphate. The polypeptide is Leucine--tRNA ligase (Mannheimia succiniciproducens (strain KCTC 0769BP / MBEL55E)).